The primary structure comprises 111 residues: Small ribosomal subunit protein bS6 (111 aa).

This sequence belongs to the bacterial ribosomal protein bS6 family.

In terms of biological role, binds together with bS18 to 16S ribosomal RNA. This chain is Small ribosomal subunit protein bS6, found in Francisella tularensis subsp. tularensis (strain FSC 198).